The primary structure comprises 519 residues: ATP synthase subunit beta, mitochondrial (519 aa).

Residues 1–21 (MLTRFRSAVLRGAVSITGARA) constitute a mitochondrion transit peptide. ATP-binding positions include 184-191 (GAGVGKTV) and R216.

It belongs to the ATPase alpha/beta chains family. In terms of assembly, F-type ATPases have 2 components, F(1) - the catalytic core - and F(o) - the membrane proton channel. F(1) has five subunits: alpha(3), beta(3), gamma(1), delta(1), epsilon(1), plus the additional subunit P18 (Tb427.05.1710) that is not present in F(1)F(o) ATP synthase from metazoa. Subunit P18 (Tb927.5.1710) interacts with the alpha subunit with a 1:1 stoichiometry; the interaction is direct. Subunit gamma is part of the central stalk. F(o) has three main subunits: a, b and c. The trypanosomal ATPase complex contains additional subunits that are not present in the F(1)F(o) ATP synthase from metazoa.

The protein resides in the mitochondrion. Its subcellular location is the mitochondrion inner membrane. The enzyme catalyses ATP + H2O + 4 H(+)(in) = ADP + phosphate + 5 H(+)(out). Its function is as follows. Mitochondrial membrane ATP synthase (F(1)F(o) ATP synthase) produces ATP from ADP in the presence of a proton gradient across the membrane which is generated by electron transport complexes of the respiratory chain. F-type ATPases consist of two structural domains, F(1) - containing the extramembraneous catalytic core, and F(o) - containing the membrane proton channel, linked together by a central stalk and a peripheral stalk. During catalysis, ATP synthesis in the catalytic domain of F(1) is coupled via a rotary mechanism of the central stalk subunits to proton translocation. Subunits alpha and beta form the catalytic core in F(1). Rotation of the central stalk against the surrounding alpha(3)beta(3) subunits leads to hydrolysis of ATP in three separate catalytic sites on the beta subunits. Contrary to the procyclic, insect form that requires F(1)F(o) ATP synthase for ATP synthesis, the bloodstream form relies on ATP hydrolysis by F(1)F(o) ATP synthase to maintain its mitochondrial membrane potential. This chain is ATP synthase subunit beta, mitochondrial, found in Trypanosoma brucei brucei.